Reading from the N-terminus, the 221-residue chain is Guanylate kinase (221 aa).

One can recognise a Guanylate kinase-like domain in the interval 18 to 196 (GFLFILSSPS…SASLIKSIYL (179 aa)). 25–32 (SPSGAGKS) contacts ATP.

The protein belongs to the guanylate kinase family.

It is found in the cytoplasm. It catalyses the reaction GMP + ATP = GDP + ADP. Functionally, essential for recycling GMP and indirectly, cGMP. The polypeptide is Guanylate kinase (Bartonella quintana (strain Toulouse) (Rochalimaea quintana)).